The chain runs to 182 residues: uncharacterized protein (182 aa).

The next 4 membrane-spanning stretches (helical) occupy residues 19–39 (LFGIIPIKFIVSFLQLVSIVS), 51–71 (IYLVLLSVGIVLNVFTVVVFI), 87–107 (IFTVVPFIYAVYTFISFIELF), and 118–138 (CSPFAYAFIFLCIYIFYLAMC).

The protein resides in the membrane. This is an uncharacterized protein from Caenorhabditis elegans.